The following is a 199-amino-acid chain: Prolactin-2 (199 aa).

Intrachain disulfides connect Cys-4/Cys-11, Cys-58/Cys-174, and Cys-191/Cys-199.

It belongs to the somatotropin/prolactin family.

The protein resides in the secreted. The polypeptide is Prolactin-2 (Crocodylus novaeguineae (Crocodile)).